We begin with the raw amino-acid sequence, 154 residues long: Putative antiporter subunit mnhG2 (154 aa).

The next 3 helical transmembrane spans lie at 11–31, 51–71, and 72–92; these read IASILIFLGSIIALISAIGIV, VLLTVVGVLIYFIVNSGFFSV, and RLLLSLVFINLTSPVGMHLIS.

It belongs to the CPA3 antiporters (TC 2.A.63) subunit G family. In terms of assembly, may form a heterooligomeric complex that consists of seven subunits: mnhA2, mnhB2, mnhC2, mnhD2, mnhE2, mnhF2 and mnhG2.

It is found in the cell membrane. This is Putative antiporter subunit mnhG2 (mnhG2) from Staphylococcus epidermidis (strain ATCC 35984 / DSM 28319 / BCRC 17069 / CCUG 31568 / BM 3577 / RP62A).